The sequence spans 283 residues: ATP phosphoribosyltransferase (283 aa).

The protein belongs to the ATP phosphoribosyltransferase family. Long subfamily. The cofactor is Mg(2+).

Its subcellular location is the cytoplasm. The catalysed reaction is 1-(5-phospho-beta-D-ribosyl)-ATP + diphosphate = 5-phospho-alpha-D-ribose 1-diphosphate + ATP. Its pathway is amino-acid biosynthesis; L-histidine biosynthesis; L-histidine from 5-phospho-alpha-D-ribose 1-diphosphate: step 1/9. Its activity is regulated as follows. Feedback inhibited by histidine. Functionally, catalyzes the condensation of ATP and 5-phosphoribose 1-diphosphate to form N'-(5'-phosphoribosyl)-ATP (PR-ATP). Has a crucial role in the pathway because the rate of histidine biosynthesis seems to be controlled primarily by regulation of HisG enzymatic activity. This is ATP phosphoribosyltransferase from Bacteroides fragilis (strain ATCC 25285 / DSM 2151 / CCUG 4856 / JCM 11019 / LMG 10263 / NCTC 9343 / Onslow / VPI 2553 / EN-2).